We begin with the raw amino-acid sequence, 296 residues long: MSAEVSTNESAPPAEKKSKLTNAQKARIERNQAKAQKLREAKLVSHPFKELASNKEGGTHPEAALSQGSSVIKVQGTKYIDSGGGFLLEQPVMPTGVGPAGLNKSGEEAPPILDDAIAIPVQYEECLECGDMFADSYLFNNFGHSVCDKCRDKDERYALITRTEAKAEYLLKDCDFDKREPKLRYISRKNPHNVRWGEMKLYLHLQIHQRALEVWGSEEELVRQHEAREDKREEGKARKYNKKMKQLRMEVRSSIYTKKTHEVHEHEFGPDTYDEEEDTYTHTCITCPYSETYEKM.

The span at 1 to 10 (MSAEVSTNES) shows a compositional bias: polar residues. The tract at residues 1-39 (MSAEVSTNESAPPAEKKSKLTNAQKARIERNQAKAQKLR) is disordered. A compositionally biased stretch (basic and acidic residues) spans 26–39 (ARIERNQAKAQKLR). The Nuclear localization signal signature appears at 26–47 (ARIERNQAKAQKLREAKLVSHP). Zn(2+)-binding residues include Cys126, Cys129, Cys147, and Cys150. The segment at 126-150 (CLECGDMFADSYLFNNFGHSVCDKC) is a zinc-finger region.

It belongs to the XPA family. Strongly expressed in the central nervous system and muscles.

The protein localises to the nucleus. Its function is as follows. Involved in DNA excision repair. Initiates repair by binding to damaged sites with various affinities, depending on the photoproduct and the transcriptional state of the region. This Drosophila melanogaster (Fruit fly) protein is DNA repair protein complementing XP-A cells homolog (Xpac).